The following is a 318-amino-acid chain: MSPQPHIPVLLAEVIAALAPRNDGVYLDGTFGAGGYSRAILAASACRVWAIDRDPTAVARGKLLEEGSAGRFSMIEGRFGDMDSLLRQQGVNQVDGIALDIGVSSMQIDQPERGFSFAKDGPLDMRMETKGPSAADMVNDTPETELANIIYRYGEERLSRRVAKAIVEARRLKRFERTGELAEVVRKVVPRSGDGIDPATRTFQALRIAVNDELGELERGLEAAERLLAPGGHLAVVTFHSLEDRVVKSFLKARSGEAARPSRHVPQAQGSGPAASFALLSRKAIGPAPDEARANPRARSAKLRAAARTAAPAWETVS.

S-adenosyl-L-methionine contacts are provided by residues 34 to 36, D52, F79, D100, and Q107; that span reads GGY. A disordered region spans residues 286 to 318; sequence GPAPDEARANPRARSAKLRAAARTAAPAWETVS. Over residues 303 to 318 the composition is skewed to low complexity; the sequence is LRAAARTAAPAWETVS.

It belongs to the methyltransferase superfamily. RsmH family.

The protein resides in the cytoplasm. It carries out the reaction cytidine(1402) in 16S rRNA + S-adenosyl-L-methionine = N(4)-methylcytidine(1402) in 16S rRNA + S-adenosyl-L-homocysteine + H(+). In terms of biological role, specifically methylates the N4 position of cytidine in position 1402 (C1402) of 16S rRNA. The protein is Ribosomal RNA small subunit methyltransferase H of Paramagnetospirillum magneticum (strain ATCC 700264 / AMB-1) (Magnetospirillum magneticum).